The primary structure comprises 549 residues: Ribosomal protein S6 kinase-like 1 (549 aa).

An MIT domain is found at 87-115 (IHVDPNKERREAVKLKITKYLRRAEEIFN). The Protein kinase domain maps to 145–539 (SAVEQLRGCR…VSKLKSHPFF (395 aa)). ATP contacts are provided by residues 151–159 (RGCRVVGVI) and lysine 177. Positions 260 to 325 (LTPARLPSGH…SDLPKAPGGH (66 aa)) are disordered. Aspartate 412 acts as the Proton acceptor in catalysis.

The protein belongs to the protein kinase superfamily. Ser/Thr protein kinase family. S6 kinase subfamily.

The enzyme catalyses L-seryl-[protein] + ATP = O-phospho-L-seryl-[protein] + ADP + H(+). The catalysed reaction is L-threonyl-[protein] + ATP = O-phospho-L-threonyl-[protein] + ADP + H(+). The polypeptide is Ribosomal protein S6 kinase-like 1 (RPS6KL1) (Pongo abelii (Sumatran orangutan)).